The chain runs to 147 residues: Large ribosomal subunit protein uL11 (147 aa).

The protein belongs to the universal ribosomal protein uL11 family. As to quaternary structure, part of the ribosomal stalk of the 50S ribosomal subunit. Interacts with L10 and the large rRNA to form the base of the stalk. L10 forms an elongated spine to which L12 dimers bind in a sequential fashion forming a multimeric L10(L12)X complex. One or more lysine residues are methylated.

Its function is as follows. Forms part of the ribosomal stalk which helps the ribosome interact with GTP-bound translation factors. The protein is Large ribosomal subunit protein uL11 of Metamycoplasma arthritidis (strain 158L3-1) (Mycoplasma arthritidis).